The primary structure comprises 100 residues: Aspartyl/glutamyl-tRNA(Asn/Gln) amidotransferase subunit C (100 aa).

Belongs to the GatC family. As to quaternary structure, heterotrimer of A, B and C subunits.

It carries out the reaction L-glutamyl-tRNA(Gln) + L-glutamine + ATP + H2O = L-glutaminyl-tRNA(Gln) + L-glutamate + ADP + phosphate + H(+). The enzyme catalyses L-aspartyl-tRNA(Asn) + L-glutamine + ATP + H2O = L-asparaginyl-tRNA(Asn) + L-glutamate + ADP + phosphate + 2 H(+). In terms of biological role, allows the formation of correctly charged Asn-tRNA(Asn) or Gln-tRNA(Gln) through the transamidation of misacylated Asp-tRNA(Asn) or Glu-tRNA(Gln) in organisms which lack either or both of asparaginyl-tRNA or glutaminyl-tRNA synthetases. The reaction takes place in the presence of glutamine and ATP through an activated phospho-Asp-tRNA(Asn) or phospho-Glu-tRNA(Gln). The sequence is that of Aspartyl/glutamyl-tRNA(Asn/Gln) amidotransferase subunit C from Rickettsia felis (strain ATCC VR-1525 / URRWXCal2) (Rickettsia azadi).